The primary structure comprises 447 residues: Tubulin beta chain (447 aa).

8 residues coordinate GTP: Q11, E69, S138, G142, T143, G144, N204, and N226. Residue E69 coordinates Mg(2+). The segment at 425-447 is disordered; it reads YQDASISEGEEEYEEEVPIEGEE. A compositionally biased stretch (acidic residues) spans 432-447; it reads EGEEEYEEEVPIEGEE.

Belongs to the tubulin family. In terms of assembly, dimer of alpha and beta chains. A typical microtubule is a hollow water-filled tube with an outer diameter of 25 nm and an inner diameter of 15 nM. Alpha-beta heterodimers associate head-to-tail to form protofilaments running lengthwise along the microtubule wall with the beta-tubulin subunit facing the microtubule plus end conferring a structural polarity. Microtubules usually have 13 protofilaments but different protofilament numbers can be found in some organisms and specialized cells. Requires Mg(2+) as cofactor.

Its subcellular location is the cytoplasm. It is found in the cytoskeleton. Its function is as follows. Tubulin is the major constituent of microtubules, a cylinder consisting of laterally associated linear protofilaments composed of alpha- and beta-tubulin heterodimers. Microtubules grow by the addition of GTP-tubulin dimers to the microtubule end, where a stabilizing cap forms. Below the cap, tubulin dimers are in GDP-bound state, owing to GTPase activity of alpha-tubulin. The polypeptide is Tubulin beta chain (tubA) (Botryotinia fuckeliana (Noble rot fungus)).